A 28-amino-acid chain; its full sequence is Conotoxin de7b (28 aa).

3 cysteine pairs are disulfide-bonded: C2/C18, C9/C22, and C17/C27. A 4-hydroxyproline; partial modification is found at P4. 4-carboxyglutamate; partial is present on E7. P14 carries the post-translational modification 4-hydroxyproline; partial.

As to expression, expressed by the venom duct.

It localises to the secreted. In terms of biological role, may inhibit sodium (Nav) or calcium channels (Cav). The chain is Conotoxin de7b from Conasprella delessertii (Sozon's cone).